We begin with the raw amino-acid sequence, 773 residues long: Leucine-rich repeat-containing protein let-4 (773 aa).

An N-terminal signal peptide occupies residues 1 to 20 (MRLLLCLLLFSTLLINSTNA). Residues 21-689 (CPGVITQACF…RLEKSFFTTT (669 aa)) lie on the Extracellular side of the membrane. 16 LRR repeats span residues 61–84 (VGLI…FFSG), 85–107 (LFIR…AFAG), 109–132 (NPVL…ALAG), 133–157 (LPNL…IFPN), 159–181 (NKLY…TFQN), 183–206 (KNSI…AIRG), 207–230 (LKQL…NFLN), 231–254 (LPVL…AFLN), 256–278 (PSLR…QFQT), 279–302 (FEQL…SLSG), 303–326 (LKQL…AFTN), 328–349 (SIVV…IISG), 350–373 (LPNL…AFYD), 375–397 (ASLV…TFLA), 399–421 (LNLL…AFNS), and 486–516 (LVQI…AFQQ). The chain crosses the membrane as a helical span at residues 690–710 (IIFICVGTAVIVLVVVIAGLC). The Cytoplasmic segment spans residues 711–773 (ISKHRQLQFE…PGSSYCNYYK (63 aa)).

As to expression, in L1 larvae, expressed in a subset of epithelial cells including epidermal, vulval and rectal cells and the excretory duct and pore. Absent from internal epithelia such as the gut and pharyngeal tubes. Transiently expressed in the excretory canal cell at the 1.5-fold embryonic stage but no longer visible in this cell at hatching.

The protein resides in the apical cell membrane. Functionally, required for apical extracellular matrix organization and epithelial junction maintenance. This chain is Leucine-rich repeat-containing protein let-4 (let-4), found in Caenorhabditis elegans.